A 329-amino-acid chain; its full sequence is MKRNIIFLVIHQFENLTMKKKQNIFFIFLLTVFFNFTVNSNVSAYPVFAQQGYKNPREANGRIVCANCHLAQKPVELEVPQAVLPDTVFEAMVKIPYDQQIKQVQANGKKGDLNVGMVLILPEGFELAPSDRLPEEMKKKVGNLYYQPYSSEQKNILVIGPIPGKLYNEMVVPLISPNPATNKNVNYLKYPIYLGGNRGRGQLYPDGSKSNNNLYNASATGKITEITPTGKKGGFDITIQTLNGETVIDKVPAGPELIVTKDQTIQVDQPLTNNPNVGGFGQAEAEIVLQNPARVQGLIIFLITIFITQLFLVLKKKQVEKVQLAEMNF.

The first 44 residues, 1–44, serve as a signal peptide directing secretion; sequence MKRNIIFLVIHQFENLTMKKKQNIFFIFLLTVFFNFTVNSNVSA. Tyr45, Cys65, Cys68, and His69 together coordinate heme. A helical transmembrane segment spans residues 295-315; sequence VQGLIIFLITIFITQLFLVLK.

This sequence belongs to the cytochrome f family. In terms of assembly, the 4 large subunits of the cytochrome b6-f complex are cytochrome b6, subunit IV (17 kDa polypeptide, petD), cytochrome f and the Rieske protein, while the 4 small subunits are PetG, PetL, PetM and PetN. The complex functions as a dimer. Heme is required as a cofactor.

Its subcellular location is the plastid. It localises to the chloroplast thylakoid membrane. In terms of biological role, component of the cytochrome b6-f complex, which mediates electron transfer between photosystem II (PSII) and photosystem I (PSI), cyclic electron flow around PSI, and state transitions. The polypeptide is Cytochrome f (Tupiella akineta (Green alga)).